The chain runs to 158 residues: Cell number regulator 11 (158 aa).

2 helical membrane passes run 49-67 (FGDL…VTFG) and 78-94 (TCCM…TIGW).

The protein belongs to the cornifelin family.

Its subcellular location is the membrane. This chain is Cell number regulator 11 (CNR11), found in Zea mays (Maize).